Here is a 436-residue protein sequence, read N- to C-terminus: GTPase Der (436 aa).

2 EngA-type G domains span residues 4–167 (PTVA…PVEE) and 175–351 (IRFS…ESQN). Residues 10–17 (GRPNVGKS), 57–61 (DTGGI), 119–122 (NKVD), 181–188 (GRPNVGKS), 229–233 (DTAGM), and 294–297 (NKWD) each bind GTP. Residues 352-436 (KRIPSAVLND…PINLIARKRK (85 aa)) enclose the KH-like domain.

Belongs to the TRAFAC class TrmE-Era-EngA-EngB-Septin-like GTPase superfamily. EngA (Der) GTPase family. In terms of assembly, associates with the 50S ribosomal subunit.

Its function is as follows. GTPase that plays an essential role in the late steps of ribosome biogenesis. In Streptococcus agalactiae serotype III (strain NEM316), this protein is GTPase Der.